The sequence spans 404 residues: Dihydrosphingosine 1-phosphate phosphatase YSR3 (404 aa).

The Lumenal portion of the chain corresponds to 1–86 (MTIIQTVTEL…PFRDVYFKYT (86 aa)). N-linked (GlcNAc...) asparagine glycosylation is present at asparagine 62. A helical membrane pass occupies residues 87–107 (SLMGSHMFYVIVLPMPVWLGY). Over 108 to 113 (RDLTRD) the chain is Cytoplasmic. A helical transmembrane segment spans residues 114–134 (MIYVLGYSIYLSGYLKDYWCL). The segment at 129 to 137 (KDYWCLPRP) is phosphatase sequence motif I. The Lumenal portion of the chain corresponds to 135–154 (PRPKSPPVDRITLSEYTTKE). The helical transmembrane segment at 155–176 (YGAPSSHSANATAVSLLFFWRI) threads the bilayer. A phosphatase sequence motif II region spans residues 158 to 161 (PSSH). Catalysis depends on histidine 161, which acts as the Proton donor. Topologically, residues 177–182 (CLSDTL) are cytoplasmic. Residues 183 to 203 (VWPTKLLLLSLVIFYYLTLVF) form a helical membrane-spanning segment. The Lumenal segment spans residues 204 to 215 (GRVYCGMHGMLD). Positions 204-215 (GRVYCGMHGMLD) are phosphatase sequence motif III. Histidine 211 serves as the catalytic Nucleophile. Residues 216–236 (LFSGAAVGAICFFIRIWVVHA) form a helical membrane-spanning segment. Residues 237-241 (LRNFQ) lie on the Cytoplasmic side of the membrane. Residues 242–262 (IGEHLWFPLLSVAWGLFILFN) traverse the membrane as a helical segment. The Lumenal portion of the chain corresponds to 263 to 319 (HVRPIDECPCFEDSVAFIGVVSGLDCSDWLTERYGWNLVCSRYASCGSKVFLRPLVG). The helical transmembrane segment at 320 to 340 (VASVIVWKDVISKTAVYTLLI) threads the bilayer. Residues 341–379 (KLLRFHDDRSEKVHFHNETSEEEECLLYSGVSKVEIVGR) lie on the Cytoplasmic side of the membrane. A helical membrane pass occupies residues 380–400 (FLIYAGIPTTVFLLCPVFFTW). Residues 401 to 404 (TNLR) lie on the Lumenal side of the membrane.

The protein belongs to the type 2 lipid phosphate phosphatase family.

Its subcellular location is the endoplasmic reticulum membrane. The catalysed reaction is sphinganine 1-phosphate + H2O = sphinganine + phosphate. Its function is as follows. Dihydrosphingosine 1-phosphate phosphatase required for efficient ceramide synthesis from exogenous sphingoid bases. Involved in endocytosis and calcium-mediated signaling. This chain is Dihydrosphingosine 1-phosphate phosphatase YSR3, found in Saccharomyces cerevisiae (strain ATCC 204508 / S288c) (Baker's yeast).